Here is a 208-residue protein sequence, read N- to C-terminus: N-(5'-phosphoribosyl)anthranilate isomerase (208 aa).

The protein belongs to the TrpF family.

It catalyses the reaction N-(5-phospho-beta-D-ribosyl)anthranilate = 1-(2-carboxyphenylamino)-1-deoxy-D-ribulose 5-phosphate. It participates in amino-acid biosynthesis; L-tryptophan biosynthesis; L-tryptophan from chorismate: step 3/5. The sequence is that of N-(5'-phosphoribosyl)anthranilate isomerase from Methanococcus vannielii (strain ATCC 35089 / DSM 1224 / JCM 13029 / OCM 148 / SB).